The sequence spans 445 residues: POU domain, class 3, transcription factor 2 (445 aa).

Disordered stretches follow at residues Ala-64 to Ala-173 and Leu-203 to Ser-269. Gly residues predominate over residues His-67–Gly-90. Low complexity-rich tracts occupy residues Gln-125–Gln-151 and His-163–Ala-173. The span at Leu-217 to His-226 shows a compositional bias: basic and acidic residues. The span at Ala-227 to Pro-237 shows a compositional bias: basic residues. The span at Gln-239 to His-253 shows a compositional bias: pro residues. The region spanning Glu-264–Asp-338 is the POU-specific domain. Ser-343 is subject to Phosphoserine. The segment at residues Lys-356 to Thr-415 is a DNA-binding region (homeobox). Residues Glu-411–Gln-445 form a disordered region.

Belongs to the POU transcription factor family. Class-3 subfamily. Interacts with PQBP1. Interaction with ISL1. Expressed specifically in the neuroectodermal cell lineage.

It is found in the nucleus. Its function is as follows. Transcription factor that plays a key role in neuronal differentiation. Binds preferentially to the recognition sequence which consists of two distinct half-sites, ('GCAT') and ('TAAT'), separated by a non-conserved spacer region of 0, 2, or 3 nucleotides. Acts as a transcriptional activator when binding cooperatively with SOX4, SOX11, or SOX12 to gene promoters. The combination of three transcription factors, ASCL1, POU3F2/BRN2 and MYT1L, is sufficient to reprogram fibroblasts and other somatic cells into induced neuronal (iN) cells in vitro. Acts downstream of ASCL1, accessing chromatin that has been opened by ASCL1, and promotes transcription of neuronal genes. This is POU domain, class 3, transcription factor 2 (Pou3f2) from Mus musculus (Mouse).